Reading from the N-terminus, the 215-residue chain is Transcription elongation factor A protein-like 4 (215 aa).

Met-1 carries the N-acetylmethionine modification. Residues 1-133 (MEKLYSENEG…RKAKRKTNKG (133 aa)) are disordered. Phosphoserine occurs at positions 6, 88, and 102. Basic and acidic residues predominate over residues 25–102 (QDERKPEVTC…KPEIEGKPES (78 aa)).

This sequence belongs to the TFS-II family. TFA subfamily.

It localises to the nucleus. May be involved in transcriptional regulation. The chain is Transcription elongation factor A protein-like 4 (TCEAL4) from Homo sapiens (Human).